The following is a 377-amino-acid chain: UDP-N-acetylenolpyruvoylglucosamine reductase (377 aa).

In terms of domain architecture, FAD-binding PCMH-type spans 48-215 (LGGTPMAAVR…LGITLQLHTD (168 aa)). Residue R193 is part of the active site. S268 serves as the catalytic Proton donor. E369 is a catalytic residue.

The protein belongs to the MurB family. FAD is required as a cofactor.

It is found in the cytoplasm. The catalysed reaction is UDP-N-acetyl-alpha-D-muramate + NADP(+) = UDP-N-acetyl-3-O-(1-carboxyvinyl)-alpha-D-glucosamine + NADPH + H(+). It functions in the pathway cell wall biogenesis; peptidoglycan biosynthesis. Its function is as follows. Cell wall formation. In Corynebacterium diphtheriae (strain ATCC 700971 / NCTC 13129 / Biotype gravis), this protein is UDP-N-acetylenolpyruvoylglucosamine reductase.